Reading from the N-terminus, the 318-residue chain is Methionyl-tRNA formyltransferase (318 aa).

113-116 (SLLP) contributes to the (6S)-5,6,7,8-tetrahydrofolate binding site.

The protein belongs to the Fmt family.

It carries out the reaction L-methionyl-tRNA(fMet) + (6R)-10-formyltetrahydrofolate = N-formyl-L-methionyl-tRNA(fMet) + (6S)-5,6,7,8-tetrahydrofolate + H(+). In terms of biological role, attaches a formyl group to the free amino group of methionyl-tRNA(fMet). The formyl group appears to play a dual role in the initiator identity of N-formylmethionyl-tRNA by promoting its recognition by IF2 and preventing the misappropriation of this tRNA by the elongation apparatus. The chain is Methionyl-tRNA formyltransferase from Hahella chejuensis (strain KCTC 2396).